The primary structure comprises 226 residues: Ribose-5-phosphate isomerase A (226 aa).

Substrate-binding positions include 26–29 (TGST), 82–85 (DGAD), and 95–98 (KGGG). Residue Glu104 is the Proton acceptor of the active site. Lys122 is a substrate binding site.

The protein belongs to the ribose 5-phosphate isomerase family. In terms of assembly, homodimer.

It catalyses the reaction aldehydo-D-ribose 5-phosphate = D-ribulose 5-phosphate. Its pathway is carbohydrate degradation; pentose phosphate pathway; D-ribose 5-phosphate from D-ribulose 5-phosphate (non-oxidative stage): step 1/1. Functionally, catalyzes the reversible conversion of ribose-5-phosphate to ribulose 5-phosphate. The chain is Ribose-5-phosphate isomerase A from Streptococcus thermophilus (strain ATCC BAA-250 / LMG 18311).